The sequence spans 127 residues: Promotilin (127 aa).

Residues 1–25 (MLSRKAVAALLLVHVTAMLASQTEG) form the signal peptide. Positions 41–67 (REQNKRLRKSLRVQQRSKAAGRLEPQE) are disordered.

This sequence belongs to the motilin family. As to expression, present in the gut mucosa with the exception of the gastric corpus. Also present in medulla oblongata, nucleus of the solitary tract, hypophysis, spinal cord, hypothalamus, and cerebellum but not in the cerebral cortex.

The protein resides in the secreted. Its function is as follows. Plays an important role in the regulation of interdigestive gastrointestinal motility and indirectly causes rhythmic contraction of duodenal and colonic smooth muscle. In Cavia porcellus (Guinea pig), this protein is Promotilin (MLN).